Here is a 745-residue protein sequence, read N- to C-terminus: 1,4-alpha-glucan branching enzyme GlgB (745 aa).

The active-site Nucleophile is aspartate 416. Catalysis depends on glutamate 469, which acts as the Proton donor.

The protein belongs to the glycosyl hydrolase 13 family. GlgB subfamily. Monomer.

It catalyses the reaction Transfers a segment of a (1-&gt;4)-alpha-D-glucan chain to a primary hydroxy group in a similar glucan chain.. Its pathway is glycan biosynthesis; glycogen biosynthesis. Catalyzes the formation of the alpha-1,6-glucosidic linkages in glycogen by scission of a 1,4-alpha-linked oligosaccharide from growing alpha-1,4-glucan chains and the subsequent attachment of the oligosaccharide to the alpha-1,6 position. The chain is 1,4-alpha-glucan branching enzyme GlgB from Shewanella sp. (strain MR-4).